A 434-amino-acid polypeptide reads, in one-letter code: MKVVIFGSSGDLAKRKLFPALSRIDLEGVGVVGYARTKYNIEFSEVLQEVGNYSPEFLSKVTYIPGPYDDLSKLKEVSDSETVLYFSVPSSVYTCLFREISKLDYKVIGVEKPYGDSIESFMEIKGFDLGKTRFIDHYLLKPLVVAMPGIIRETGAIREVMSNRYVKSVEIVSKEVLGGEGRHYFDKNGIIRDMVLSHMGELLGVVASDVTKPSRIMEALARMEVFKACTVDTERCIYGQYDDYIKEIHKDSSTETFCMVPISIGTPRWSKVPFIIVAGKGMNEKRTEIILEFRRDVFAKCIELFSMPRQSSCRIVHTNEIETVRLVFNIYPECEVFLEVLVGGEPVRYVLHDKKEIDGLMHDSYGGYHDYEIIFDSLVRGKDFSSVSSQEAELLWKVFNPILSISKEDMLFYYSKGIDMPKEAEEMIREIKDH.

NADP(+) is bound by residues 7-14 (GSSGDLAK), arginine 36, tyrosine 93, and lysine 112. Residues lysine 112, 137 to 141 (HYLLK), glutamate 175, and aspartate 193 each bind D-glucose 6-phosphate. Residue histidine 198 is the Proton acceptor of the active site. D-glucose 6-phosphate contacts are provided by lysine 280 and lysine 285. Arginine 286 is an NADP(+) binding site.

It belongs to the glucose-6-phosphate dehydrogenase family.

The enzyme catalyses D-glucose 6-phosphate + NADP(+) = 6-phospho-D-glucono-1,5-lactone + NADPH + H(+). It participates in carbohydrate degradation; pentose phosphate pathway; D-ribulose 5-phosphate from D-glucose 6-phosphate (oxidative stage): step 1/3. In terms of biological role, catalyzes the rate-limiting step of the oxidative pentose-phosphate pathway, which represents a route for the dissimilation of carbohydrates besides glycolysis. The main function of this enzyme is to provide reducing power (NADPH) and pentose phosphates for fatty acid and nucleic acid synthesis. This Encephalitozoon cuniculi (strain GB-M1) (Microsporidian parasite) protein is Glucose-6-phosphate 1-dehydrogenase (ZWF1).